Here is a 476-residue protein sequence, read N- to C-terminus: MYPKIQHIHFVGIGGIGMSGIAEVLLTLGYRVSGSDLSENANIKRLRDKGAHIQQGHTAQAIEGADAVVTSSAVKRDNPEVMAARALRIPVVPRAEMLAELMRLKYGIAIAGTHGKTTTTSLVAALLGAADMDPTVVNGGIVKSLGSNAHVGQGAFLVTEADESDGSFLKLSPTIAVVTNMDPEHMNHYGTFDAVREAFRGFVSKIPFYGLAVLCGDHPEVSLLAEEMLDKRVITYGLSDQVDLQAVHIRQEGIVTHFEVIQHDRHHGRESRSLGTIQLNMPGCHNVSNTLAALAVAMELAVPWERCVRALAGFGGVQRRFDLLHQEAAITIIDDYAHHPVEIAATMEAVRNGYPQQRVVAVFQPHRYSRVLDHMHDFCRCFKNADVVLVDEIYRAGEQPPEGPLGEQGAIVLVEGIRRHSSAQVALLADDARWGLDLGGQLKPNDVVVFLGAGDISRRAHSFAAGWSQQTDPKTV.

112–118 is an ATP binding site; it reads GTHGKTT.

It belongs to the MurCDEF family.

Its subcellular location is the cytoplasm. The enzyme catalyses UDP-N-acetyl-alpha-D-muramate + L-alanine + ATP = UDP-N-acetyl-alpha-D-muramoyl-L-alanine + ADP + phosphate + H(+). Its pathway is cell wall biogenesis; peptidoglycan biosynthesis. Functionally, cell wall formation. This chain is UDP-N-acetylmuramate--L-alanine ligase, found in Magnetococcus marinus (strain ATCC BAA-1437 / JCM 17883 / MC-1).